A 1451-amino-acid chain; its full sequence is Glutamate receptor ionotropic, NMDA 2A (1451 aa).

An N-terminal signal peptide occupies residues 1–20; sequence MGMFVLLLYTFLYAGDLGHG. At 21–547 the chain is on the extracellular side; it reads AEKSFPVLNI…PSAFLEPFSA (527 aa). N-linked (GlcNAc...) asparagine glycosylation occurs at N67. C79 and C312 are joined by a disulfide. Zn(2+) contacts are provided by H120, D258, and D274. N332, N372, N435, and N436 each carry an N-linked (GlcNAc...) asparagine glycan. Cystine bridges form between C421/C447 and C428/C448. The L-glutamate site is built by S503, T505, and R510. Residue N533 is glycosylated (N-linked (GlcNAc...) asparagine). A helical membrane pass occupies residues 548–568; the sequence is SVWVMMFVMLLLVSAMAVFIF. At 569–592 the chain is on the cytoplasmic side; that stretch reads EYFSPVGYNRNLAQGKDPHGPSFT. The segment at 591 to 612 is pore-forming; it reads FTIGKAVWLLWGLVFNNSVPVQ. The segment at residues 593 to 612 is an intramembrane region (discontinuously helical); that stretch reads IGKAVWLLWGLVFNNSVPVQ. The Cytoplasmic portion of the chain corresponds to 613–617; it reads NPKGT. A helical transmembrane segment spans residues 618–637; it reads TSKIIVSIWAFFAVIFLASY. Topologically, residues 638 to 808 are extracellular; the sequence is TANLAAFMIQ…VMSSQLDIDN (171 aa). N679 carries an N-linked (GlcNAc...) asparagine glycan. L-glutamate-binding residues include S681, T682, and D723. C737 and C792 are disulfide-bonded. Residues 809-829 traverse the membrane as a helical segment; the sequence is MAGVFYMLAAAMALSLITFVW. At 830 to 1451 the chain is on the cytoplasmic side; it reads EHLFYWKLRF…KKMPSLESDV (622 aa). Over residues 1011 to 1022 the composition is skewed to polar residues; it reads TLRQTQGSVNEN. Disordered regions lie at residues 1011–1080 and 1100–1165; these read TLRQ…VSAK and NRDK…GRLP. Basic and acidic residues-rich tracts occupy residues 1055–1073, 1100–1113, and 1138–1149; these read CHID…DNLK, NRDK…DKEP, and YQDHNDNYRKTE.

It belongs to the glutamate-gated ion channel (TC 1.A.10.1) family. As to quaternary structure, heterotetramer. Forms heterotetrameric channels composed of two GluN1/zeta subunits (GRIN1), and two identical GluN2/epsilon subunits (GRIN2A, GRIN2B, GRIN2C or GRIN2D) or GluN3 subunits (GRIN3A or GRIN3B) (in vitro). In vivo, the subunit composition may depend on the expression levels of the different subunits.

The protein resides in the cell membrane. It localises to the postsynaptic cell membrane. The enzyme catalyses Ca(2+)(in) = Ca(2+)(out). The catalysed reaction is Na(+)(in) = Na(+)(out). It catalyses the reaction K(+)(in) = K(+)(out). In terms of biological role, component of N-methyl-D-aspartate (NMDA) receptors (NMDARs) that function as heterotetrameric, ligand-gated cation channels with high calcium permeability and voltage-dependent block by Mg(2+). MDARs participate in synaptic plasticity. Channel activation requires binding of the neurotransmitter L-glutamate to the GluN2 subunit, glycine binding to the GluN1 subunit, plus membrane depolarization to eliminate channel inhibition by Mg(2+). NMDARs mediate simultaneously the potasium efflux and the influx of calcium and sodium. Each GluN2 subunit confers differential attributes to channel properties, including activation, deactivation and desensitization kinetics, pH sensitivity, Ca2(+) permeability, and binding to allosteric modulators. Plays a role in dendritic branching in brain neurons and in synaptic plasticity. This is Glutamate receptor ionotropic, NMDA 2A from Xenopus laevis (African clawed frog).